A 22-amino-acid chain; its full sequence is Motilin (22 aa).

The segment at 1–22 (FVPIFTHSELQKIREKERNKGQ) is disordered. Basic and acidic residues predominate over residues 9–22 (ELQKIREKERNKGQ).

This sequence belongs to the motilin family.

It is found in the secreted. Plays an important role in the regulation of interdigestive gastrointestinal motility and indirectly causes rhythmic contraction of duodenal and colonic smooth muscle. The protein is Motilin (MLN) of Canis lupus familiaris (Dog).